Consider the following 384-residue polypeptide: Gastrin-releasing peptide receptor (384 aa).

Over 1 to 38 (MALNDCFLLNLEVDHFMHCNISSHSADLPVNDDWSHPG) the chain is Extracellular. An N-linked (GlcNAc...) asparagine glycan is attached at N20. The chain crosses the membrane as a helical span at residues 39–62 (ILYVIPAVYGVIILIGLIGNITLI). The Cytoplasmic portion of the chain corresponds to 63–76 (KIFCTVKSMRNVPN). The chain crosses the membrane as a helical span at residues 77–96 (LFISSLALGDLLLLITCAPV). Residues 97–114 (DASRYLADRWLFGRIGCK) lie on the Extracellular side of the membrane. C113 and C196 are disulfide-bonded. The chain crosses the membrane as a helical span at residues 115 to 136 (LIPFIQLTSVGVSVFTLTALSA). The Cytoplasmic portion of the chain corresponds to 137–152 (DRYKAIVRPMDIQASH). The helical transmembrane segment at 153 to 174 (ALMKICLKAAFIWIISMLLAIP) threads the bilayer. The Extracellular portion of the chain corresponds to 175–208 (EAVFSDLHPFHEESTNQTFISCAPYPHSNELHPK). The chain crosses the membrane as a helical span at residues 209-234 (IHSMASFLVFYVIPLSIISVYYYFIA). Residues 235-264 (KNLIQSAYNLPVEGNIHVKKQIESRKRLAK) lie on the Cytoplasmic side of the membrane. A helical transmembrane segment spans residues 265 to 285 (TVLVFVGLFAFCWLPNHVIYL). The Extracellular segment spans residues 286–298 (YRSYHYSEVDTSM). A helical transmembrane segment spans residues 299–325 (LHFVTSICARLLAFTNSCVNPFALYLL). The Cytoplasmic portion of the chain corresponds to 326-384 (SKSFRKQFNTQLLCCQPGLIIRSHSTGRSTTCMTSLKSTNPSVATFSLINGNICHERYV). C339 carries S-palmitoyl cysteine lipidation. A Phosphoserine modification is found at S350.

The protein belongs to the G-protein coupled receptor 1 family. In terms of tissue distribution, highly expressed in pancreas. Also expressed in stomach, adrenal cortex and brain. In brain, expressed in cells throughout the cortex.

Its subcellular location is the cell membrane. Receptor for gastrin-releasing peptide (GRP). Signals via association with G proteins that activate a phosphatidylinositol-calcium second messenger system, resulting in Akt phosphorylation. Contributes to the regulation of food intake. Contributes to the perception of prurient stimuli and transmission of itch signals in the spinal cord that promote scratching behavior, but does not play a role in the perception of pain. Contributes primarily to nonhistaminergic itch sensation. In one study, shown to act in the amygdala as part of an inhibitory network which inhibits memory specifically related to learned fear. In another study, shown to contribute to disinhibition of glutamatergic cells in the auditory cortex via signaling on vasoactive intestinal peptide-expressing cells which leads to enhanced auditory fear memories. Contributes to the induction of sighing through signaling in the pre-Botzinger complex, a cluster of several thousand neurons in the ventrolateral medulla responsible for inspiration during respiratory activity. The polypeptide is Gastrin-releasing peptide receptor (GRPR) (Homo sapiens (Human)).